The chain runs to 303 residues: Signal recognition particle receptor FtsY (303 aa).

Residues 108–115 (GVNGAGKT), 190–194 (DTAGR), and 254–257 (TKLD) contribute to the GTP site.

It belongs to the GTP-binding SRP family. FtsY subfamily. Part of the signal recognition particle protein translocation system, which is composed of SRP and FtsY. SRP is a ribonucleoprotein composed of Ffh and a 4.5S RNA molecule.

It is found in the cell inner membrane. The protein resides in the cytoplasm. It catalyses the reaction GTP + H2O = GDP + phosphate + H(+). Its function is as follows. Involved in targeting and insertion of nascent membrane proteins into the cytoplasmic membrane. Acts as a receptor for the complex formed by the signal recognition particle (SRP) and the ribosome-nascent chain (RNC). Interaction with SRP-RNC leads to the transfer of the RNC complex to the Sec translocase for insertion into the membrane, the hydrolysis of GTP by both Ffh and FtsY, and the dissociation of the SRP-FtsY complex into the individual components. The chain is Signal recognition particle receptor FtsY from Rickettsia bellii (strain RML369-C).